The sequence spans 908 residues: Metabotropic glutamate receptor 8 (908 aa).

The signal sequence occupies residues 1–33; that stretch reads MVCEGKRLASCPCFFLLTAKFYWILTMMQRTHS. The Extracellular portion of the chain corresponds to 34-583; it reads QEYAHSIRVD…IIKLEWHSPW (550 aa). Cys64 and Cys106 are joined by a disulfide. An N-linked (GlcNAc...) asparagine glycan is attached at Asn95. L-glutamate contacts are provided by residues Ser156, 177–179, and Tyr227; that span reads AST. 7 disulfide bridges follow: Cys246–Cys534, Cys369–Cys384, Cys424–Cys431, Cys516–Cys535, Cys520–Cys538, Cys541–Cys553, and Cys556–Cys569. Asn298 is a glycosylation site (N-linked (GlcNAc...) asparagine). An L-glutamate-binding site is contributed by Asp309. Residue Lys401 coordinates L-glutamate. Asn452 and Asn480 each carry an N-linked (GlcNAc...) asparagine glycan. The N-linked (GlcNAc...) asparagine glycan is linked to Asn565. Residues 584–608 traverse the membrane as a helical segment; the sequence is AVVPVFIAILGIIATTFVIVTFVRY. Residues 609–620 lie on the Cytoplasmic side of the membrane; it reads NDTPIVRASGRE. A helical transmembrane segment spans residues 621-641; sequence LSYVLLTGIFLCYSITFLMIA. Residues 642–647 lie on the Extracellular side of the membrane; sequence APDTII. The helical transmembrane segment at 648 to 668 threads the bilayer; the sequence is CSFRRIFLGLGMCFSYAALLT. The Cytoplasmic segment spans residues 669 to 695; that stretch reads KTNRIHRIFEQGKKSVTAPKFISPASQ. The helical transmembrane segment at 696–716 threads the bilayer; sequence LVITFSLISVQLLGVFVWFVV. The Extracellular segment spans residues 717–746; that stretch reads DPPHTIIDYGEQRTLDPENARGVLKCDISD. The chain crosses the membrane as a helical span at residues 747–768; that stretch reads LSLICSLGYSILLMVTCTVYAI. Topologically, residues 769-781 are cytoplasmic; it reads KTRGVPETFNEAK. A helical transmembrane segment spans residues 782 to 803; the sequence is PIGFTMYTTCIIWLAFIPIFFG. Residues 804 to 818 lie on the Extracellular side of the membrane; it reads TAQSAEKMYIQTTTL. Residues 819-843 traverse the membrane as a helical segment; the sequence is TVSMSLSASVSLGMLYMPKVYIIIF. The Cytoplasmic segment spans residues 844–908; sequence HPEQNVQKRK…TYISYSNHSI (65 aa). Residue Lys882 forms a Glycyl lysine isopeptide (Lys-Gly) (interchain with G-Cter in SUMO1) linkage.

Belongs to the G-protein coupled receptor 3 family. As to quaternary structure, interacts with PICK1. Prominent expression in olfactory bulb, pontine gray, lateral reticular nucleus of the thalamus, and piriform cortex. Less abundant expression incerebral cortex, hippocampus, cerebellum, and mammillary body.

The protein localises to the cell membrane. G-protein coupled receptor for glutamate. Ligand binding causes a conformation change that triggers signaling via guanine nucleotide-binding proteins (G proteins) and modulates the activity of down-stream effectors. Signaling inhibits adenylate cyclase activity. The chain is Metabotropic glutamate receptor 8 (Grm8) from Rattus norvegicus (Rat).